The sequence spans 575 residues: Glutathione hydrolase proenzyme (575 aa).

The first 24 residues, 1-24 (MKNQTFSKALLATALSCALFNVHA), serve as a signal peptide directing secretion. Arg100 lines the L-glutamate pocket. The active-site Nucleophile is Thr376. Residues Thr394, Asn396, Glu415, Asp418, 447–448 (SS), and 468–469 (GG) contribute to the L-glutamate site.

Belongs to the gamma-glutamyltransferase family. As to quaternary structure, this enzyme consists of two polypeptide chains, which are synthesized in precursor form from a single polypeptide. In terms of processing, cleaved by autocatalysis into a large and a small subunit.

The protein resides in the periplasm. The catalysed reaction is an N-terminal (5-L-glutamyl)-[peptide] + an alpha-amino acid = 5-L-glutamyl amino acid + an N-terminal L-alpha-aminoacyl-[peptide]. It catalyses the reaction glutathione + H2O = L-cysteinylglycine + L-glutamate. The enzyme catalyses an S-substituted glutathione + H2O = an S-substituted L-cysteinylglycine + L-glutamate. It participates in sulfur metabolism; glutathione metabolism. This chain is Glutathione hydrolase proenzyme (ggt), found in Pseudomonas sp. (strain A14).